The following is a 91-amino-acid chain: Uteroglobin (91 aa).

Residues 1–21 (MKLAITITLAILALCCSPASA) form the signal peptide.

This sequence belongs to the secretoglobin family. As to quaternary structure, antiparallel homodimer; disulfide-linked. Interaction with LMBR1L is controversial. As to expression, club cells (nonciliated cells of the surface epithelium of the pulmonary airways). Expressed in lung, uterus, and prostate.

The protein localises to the secreted. Functionally, binds phosphatidylcholine, phosphatidylinositol, polychlorinated biphenyls (PCB) and weakly progesterone, potent inhibitor of phospholipase A2. In Equus caballus (Horse), this protein is Uteroglobin (SCGB1A1).